The following is a 194-amino-acid chain: Probable DNA-directed RNA polymerase subunit delta (194 aa).

The region spanning 14–83 (LSMIEVARAI…GENKWGLRSW (70 aa)) is the HTH HARE-type domain. The disordered stretch occupies residues 117–194 (GDEDAIDYSD…SDDEEDEEGE (78 aa)).

This sequence belongs to the RpoE family. In terms of assembly, RNAP is composed of a core of 2 alpha, a beta and a beta' subunits. The core is associated with a delta subunit and one of several sigma factors.

Participates in both the initiation and recycling phases of transcription. In the presence of the delta subunit, RNAP displays an increased specificity of transcription, a decreased affinity for nucleic acids, and an increased efficiency of RNA synthesis because of enhanced recycling. In Streptococcus mutans serotype c (strain ATCC 700610 / UA159), this protein is Probable DNA-directed RNA polymerase subunit delta.